We begin with the raw amino-acid sequence, 85 residues long: Neurotoxin beta-KTx 14.3 (85 aa).

A signal peptide spans 1-20; sequence MKQYIFFLALIVLTATFAEA. A propeptide spanning residues 21-37 is cleaved from the precursor; that stretch reads GKKTEILDKVKKVFSKG. A BetaSPN-type CS-alpha/beta domain is found at 49–85; the sequence is ELGCPFIEKWCEDHCESKKQVGKCENFDCSCVKLGGK. Cystine bridges form between C52–C72, C59–C77, and C63–C79.

The protein belongs to the long chain scorpion toxin family. Class 2 subfamily. Expressed by the venom gland.

The protein resides in the secreted. Toxin with activity on voltage-gated potassium channels. Moderately and reversibly blocks up to 50% of the activity of Kv7.1/KCNQ1 (tested at 22 uM). 3D-structure modeling of the KCNQ1-toxin complex shows that the toxin interacts with the channel pore domain. Additionally, shows a very weak effect to block voltage-gated potassium channel Kv1.1/KCNA1. In terms of biological role, has a very weak effect to block voltage-gated potassium channel Kv1.1/KCNA1. This is Neurotoxin beta-KTx 14.3 from Lychas mucronatus (Chinese swimming scorpion).